Consider the following 626-residue polypeptide: ATP-dependent RNA helicase dbp-8 (626 aa).

The segment covering Met-1 to Ala-25 has biased composition (low complexity). Residues Met-1–Pro-183 form a disordered region. Residues Asp-40 to Asn-98 show a composition bias toward acidic residues. Residues Lys-161–Glu-173 show a composition bias toward basic and acidic residues. A Q motif motif is present at residues Thr-195–Lys-223. The Helicase ATP-binding domain occupies Ile-226–Pro-406. Ser-239 to Thr-246 provides a ligand contact to ATP. Positions Asp-348 to Asp-351 match the DEAD box motif. In terms of domain architecture, Helicase C-terminal spans Tyr-438–Arg-589.

It belongs to the DEAD box helicase family. DDX49/DBP8 subfamily.

It localises to the nucleus. It is found in the nucleolus. It carries out the reaction ATP + H2O = ADP + phosphate + H(+). Functionally, ATP-binding RNA helicase involved in 40S ribosomal subunit biogenesis and is required for the normal formation of 18S rRNAs through pre-rRNA processing at A0, A1 and A2 sites. Required for vegetative growth. This chain is ATP-dependent RNA helicase dbp-8 (dbp-8), found in Neurospora crassa (strain ATCC 24698 / 74-OR23-1A / CBS 708.71 / DSM 1257 / FGSC 987).